Consider the following 354-residue polypeptide: Uroporphyrinogen decarboxylase (354 aa).

Substrate contacts are provided by residues 27–31, Asp-77, Tyr-154, Ser-209, and His-327; that span reads RQAGR.

Belongs to the uroporphyrinogen decarboxylase family. Homodimer.

It is found in the cytoplasm. It carries out the reaction uroporphyrinogen III + 4 H(+) = coproporphyrinogen III + 4 CO2. It functions in the pathway porphyrin-containing compound metabolism; protoporphyrin-IX biosynthesis; coproporphyrinogen-III from 5-aminolevulinate: step 4/4. In terms of biological role, catalyzes the decarboxylation of four acetate groups of uroporphyrinogen-III to yield coproporphyrinogen-III. The protein is Uroporphyrinogen decarboxylase of Pseudomonas savastanoi pv. phaseolicola (strain 1448A / Race 6) (Pseudomonas syringae pv. phaseolicola (strain 1448A / Race 6)).